We begin with the raw amino-acid sequence, 332 residues long: Alpha-N-acetylgalactosaminide alpha-2,6-sialyltransferase 6 (332 aa).

Positions 1 to 26 (MACPRPLSQCDHTPLPGPPAGHWPLP) are disordered. Residues 1-42 (MACPRPLSQCDHTPLPGPPAGHWPLPLSRRRREMKSNKEQRS) lie on the Cytoplasmic side of the membrane. A helical; Signal-anchor for type II membrane protein membrane pass occupies residues 43 to 63 (AVFVILFALITILILYSSSSA). Residues 64–332 (NEVFHYGSLR…GITFSHPSWT (269 aa)) are Lumenal-facing. Residue Asn-97 is glycosylated (N-linked (GlcNAc...) asparagine). The cysteines at positions 107 and 255 are disulfide-linked.

The protein belongs to the glycosyltransferase 29 family.

Its subcellular location is the golgi apparatus membrane. The catalysed reaction is a ganglioside GM1b (d18:1(4E)) + CMP-N-acetyl-beta-neuraminate = a ganglioside GD1alpha (d18:1(4E)) + CMP + H(+). It carries out the reaction N-acetyl-alpha-neuraminosyl-(2-&gt;3)-beta-D-galactosyl-(1-&gt;3)-N-acetyl-beta-D-glucosaminyl-(1-&gt;3)-beta-D-galactosyl-(1-&gt;4)-beta-D-glucosyl-(1&lt;-&gt;1')-N-acyl-sphing-4-enine + CMP-N-acetyl-beta-neuraminate = N-acetyl-alpha-neuraminosyl-(2-&gt;3)-beta-D-galactosyl-(1-&gt;3)-[N-acetyl-alpha-neuraminosyl-(2-&gt;6)]-N-acetyl-beta-D-glucosaminyl-(1-&gt;3)-beta-D-galactosyl-(1-&gt;4)-beta-D-glucosyl-(1&lt;-&gt;1')-N-acyl-sphing-4-enine + CMP + H(+). It catalyses the reaction a globoside MSGG + CMP-N-acetyl-beta-neuraminate = a globoside DSGG + CMP + H(+). The enzyme catalyses a ganglioside GD1a (d18:1(4E)) + CMP-N-acetyl-beta-neuraminate = a ganglioside GT1aalpha (d18:1(4E)) + CMP + H(+). The catalysed reaction is a ganglioside GT1b (d18:1(4E)) + CMP-N-acetyl-beta-neuraminate = a ganglioside GQ1balpha (d18:1(4E)) + CMP + H(+). It carries out the reaction 3-O-[alpha-Neu5Ac-(2-&gt;3)-beta-D-Gal-(1-&gt;3)-alpha-D-GalNAc]-L-Ser-[protein] + CMP-N-acetyl-beta-neuraminate = a 3-O-{alpha-Neu5Ac-(2-&gt;3)-beta-D-Gal-(1-&gt;3)-[alpha-Neu5Ac-(2-&gt;6)]-alpha-D-GalNAc}-L-seryl-[protein] + CMP + H(+). It catalyses the reaction 3-O-[alpha-Neu5Ac-(2-&gt;3)-beta-D-Gal-(1-&gt;3)-alpha-D-GalNAc]-L-Thr-[protein] + CMP-N-acetyl-beta-neuraminate = a 3-O-{alpha-Neu5Ac-(2-&gt;3)-beta-D-Gal-(1-&gt;3)-[alpha-Neu5Ac-(2-&gt;6)]-alpha-D-GalNAc}-L-threonyl-[protein] + CMP + H(+). Functionally, transfers the sialyl group (N-acetyl-alpha-neuraminyl or NeuAc) from CMP-NeuAc onto glycoproteins and glycolipids, forming an alpha-2,6-linkage. Produces branched type disialyl structures by transfer of a sialyl group onto the GalNAc or GlcNAc residue inside backbone core chains having a terminal sialic acid with an alpha-2,3-linkage on Gal. ST6GalNAcVI prefers glycolipids to glycoproteins, predominantly catalyzing the biosynthesis of ganglioside GD1alpha from GM1b. Besides GMb1, MSGG and other glycolipids, it shows activity towards sialyl Lc4Cer generating disialyl Lc4Cer, which can lead to the synthesis of disialyl Lewis a (Le(a)), suggested to be a cancer-associated antigen. Also has activity toward GD1a and GT1b, and can generate DSGG (disialylgalactosylgloboside) from MSGG (monosialylgalactosylgloboside). The protein is Alpha-N-acetylgalactosaminide alpha-2,6-sialyltransferase 6 (ST6GALNAC6) of Bos taurus (Bovine).